The following is a 123-amino-acid chain: uncharacterized protein (123 aa).

The segment at 1–24 (MGGGGPPARVQGTEGSQTGGGAVA) is disordered.

This is an uncharacterized protein from Halorubrum pleomorphic virus 1 (HRPV-1).